Here is a 75-residue protein sequence, read N- to C-terminus: Large ribosomal subunit protein bL31 (75 aa).

Zn(2+) contacts are provided by cysteine 16, cysteine 18, cysteine 37, and cysteine 40.

This sequence belongs to the bacterial ribosomal protein bL31 family. Type A subfamily. Part of the 50S ribosomal subunit. Zn(2+) is required as a cofactor.

Its function is as follows. Binds the 23S rRNA. In Nitrosospira multiformis (strain ATCC 25196 / NCIMB 11849 / C 71), this protein is Large ribosomal subunit protein bL31.